A 375-amino-acid polypeptide reads, in one-letter code: Carbamoyl phosphate synthase small chain (375 aa).

The interval 1 to 180 is CPSase; that stretch reads MSKALLVLED…DAYVVEPKGK (180 aa). Residues Ser46, Gly232, and Gly234 each coordinate L-glutamine. In terms of domain architecture, Glutamine amidotransferase type-1 spans 184–375; that stretch reads TVAALDLGIK…SFVELMAAQR (192 aa). The active-site Nucleophile is the Cys260. Residues Phe261, Gln264, Asn302, Gly304, and Phe305 each contribute to the L-glutamine site. Residues His350 and Glu352 contribute to the active site.

It belongs to the CarA family. As to quaternary structure, composed of two chains; the small (or glutamine) chain promotes the hydrolysis of glutamine to ammonia, which is used by the large (or ammonia) chain to synthesize carbamoyl phosphate. Tetramer of heterodimers (alpha,beta)4.

The catalysed reaction is hydrogencarbonate + L-glutamine + 2 ATP + H2O = carbamoyl phosphate + L-glutamate + 2 ADP + phosphate + 2 H(+). It carries out the reaction L-glutamine + H2O = L-glutamate + NH4(+). The protein operates within amino-acid biosynthesis; L-arginine biosynthesis; carbamoyl phosphate from bicarbonate: step 1/1. Its pathway is pyrimidine metabolism; UMP biosynthesis via de novo pathway; (S)-dihydroorotate from bicarbonate: step 1/3. Functionally, small subunit of the glutamine-dependent carbamoyl phosphate synthetase (CPSase). CPSase catalyzes the formation of carbamoyl phosphate from the ammonia moiety of glutamine, carbonate, and phosphate donated by ATP, constituting the first step of 2 biosynthetic pathways, one leading to arginine and/or urea and the other to pyrimidine nucleotides. The small subunit (glutamine amidotransferase) binds and cleaves glutamine to supply the large subunit with the substrate ammonia. In Mycobacterium leprae (strain TN), this protein is Carbamoyl phosphate synthase small chain.